A 1357-amino-acid polypeptide reads, in one-letter code: DNA-directed RNA polymerase subunit beta (1357 aa).

It belongs to the RNA polymerase beta chain family. In terms of assembly, the RNAP catalytic core consists of 2 alpha, 1 beta, 1 beta' and 1 omega subunit. When a sigma factor is associated with the core the holoenzyme is formed, which can initiate transcription.

The enzyme catalyses RNA(n) + a ribonucleoside 5'-triphosphate = RNA(n+1) + diphosphate. Its function is as follows. DNA-dependent RNA polymerase catalyzes the transcription of DNA into RNA using the four ribonucleoside triphosphates as substrates. The protein is DNA-directed RNA polymerase subunit beta of Pseudomonas aeruginosa (strain ATCC 15692 / DSM 22644 / CIP 104116 / JCM 14847 / LMG 12228 / 1C / PRS 101 / PAO1).